We begin with the raw amino-acid sequence, 172 residues long: ATP synthase subunit b (172 aa).

Residues Leu-5–Ser-24 form a helical membrane-spanning segment.

Belongs to the ATPase B chain family. In terms of assembly, F-type ATPases have 2 components, F(1) - the catalytic core - and F(0) - the membrane proton channel. F(1) has five subunits: alpha(3), beta(3), gamma(1), delta(1), epsilon(1). F(0) has three main subunits: a(1), b(2) and c(10-14). The alpha and beta chains form an alternating ring which encloses part of the gamma chain. F(1) is attached to F(0) by a central stalk formed by the gamma and epsilon chains, while a peripheral stalk is formed by the delta and b chains.

The protein resides in the cell inner membrane. F(1)F(0) ATP synthase produces ATP from ADP in the presence of a proton or sodium gradient. F-type ATPases consist of two structural domains, F(1) containing the extramembraneous catalytic core and F(0) containing the membrane proton channel, linked together by a central stalk and a peripheral stalk. During catalysis, ATP synthesis in the catalytic domain of F(1) is coupled via a rotary mechanism of the central stalk subunits to proton translocation. In terms of biological role, component of the F(0) channel, it forms part of the peripheral stalk, linking F(1) to F(0). The chain is ATP synthase subunit b from Nitratiruptor sp. (strain SB155-2).